The sequence spans 456 residues: RuvB-like 1 (456 aa).

70 to 77 contacts ATP; it reads GPPGTGKT.

This sequence belongs to the RuvB family. Forms homohexameric rings. Can form a dodecamer with ruvbl2 made of two stacked hexameric rings. Is a component of the RNA polymerase II holoenzyme complex. Component of the chromatin-remodeling Ino80 complex. Component of some MLL1/MLL complex.

The protein localises to the nucleus. The protein resides in the dynein axonemal particle. The catalysed reaction is ATP + H2O = ADP + phosphate + H(+). Its function is as follows. Has single-stranded DNA-stimulated ATPase and ATP-dependent DNA helicase (3' to 5') activity suggesting a role in nuclear processes such as recombination and transcription. Proposed core component of the chromatin remodeling INO80 complex which exhibits DNA- and nucleosome-activated ATPase activity and catalyzes ATP-dependent nucleosome sliding. The protein is RuvB-like 1 (ruvbl1) of Xenopus laevis (African clawed frog).